Consider the following 449-residue polypeptide: 1H-pyrrole-2-carbonyl-[peptidyl-carrier protein] chlorinase (449 aa).

FAD-binding residues include Ala16, Glu35, Arg41, His43, Val44, Ser47, Arg123, Ile147, and Asp316. 2 residues coordinate chloride: Ser327 and Gly328. Val329 is an FAD binding site.

The protein belongs to the flavin-dependent halogenase family. As to quaternary structure, homodimer.

The enzyme catalyses (1H-pyrrole-2-carbonyl)-[peptidyl-carrier protein] + 2 FADH2 + 2 chloride + 2 O2 = (4,5-dichloro-1H-pyrrole-2-carbonyl)-[peptidyl-carrier protein] + 2 FAD + 4 H2O. The catalysed reaction is (1H-pyrrole-2-carbonyl)-[peptidyl-carrier protein] + FADH2 + chloride + O2 = (5-chloro-1H-pyrrole-2-carbonyl)-[peptidyl-carrier protein] + FAD + 2 H2O. It carries out the reaction (5-chloro-1H-pyrrole-2-carbonyl)-[peptidyl-carrier protein] + FADH2 + chloride + O2 = (4,5-dichloro-1H-pyrrole-2-carbonyl)-[peptidyl-carrier protein] + FAD + 2 H2O. It participates in antibiotic biosynthesis. Functionally, involved in the biosynthesis of the antibiotic pyoluteorin. Catalyzes the dichlorination of the pyrrole ring of pyrrolyl-S-PltL, generating the 5-chloropyrrolyl-S-PltL intermediate and then the 4,5-dichloropyrrolyl-S-PltL product. The chain is 1H-pyrrole-2-carbonyl-[peptidyl-carrier protein] chlorinase from Pseudomonas fluorescens (strain ATCC BAA-477 / NRRL B-23932 / Pf-5).